The chain runs to 846 residues: Arsenate respiratory reductase molybdopterin-containing subunit ArrA (846 aa).

The tat-type signal signal peptide spans 1 to 29 (MRIKRREFLKASAAVGAVAVASPTLNAFA). Positions 43–99 (GKWIPSTCQGCTTWCPVEFLFRMAVRSKYAATQLSKANNGYCCVRGHLMLQQLYDPD) constitute a 4Fe-4S Mo/W bis-MGD-type domain. [4Fe-4S] cluster contacts are provided by Cys-50, Cys-53, Cys-57, and Cys-85. Arg-155 serves as a coordination point for arsenite. Tyr-156 provides a ligand contact to arsenate. His-179 lines the arsenite pocket. Ser-180 contacts arsenate. Cys-183 contacts Mo-bis(molybdopterin guanine dinucleotide). Residue Lys-188 coordinates arsenate. Tyr-200 contacts arsenite.

It belongs to the prokaryotic molybdopterin-containing oxidoreductase family. Heterodimer composed of one large subunit (ArrA) and one small subunit (ArrB). The cofactor is [4Fe-4S] cluster. Mo-bis(molybdopterin guanine dinucleotide) is required as a cofactor. Post-translationally, predicted to be exported by the Tat system. The position of the signal peptide cleavage has been experimentally proven.

The protein resides in the periplasm. The catalysed reaction is arsenite + A + H2O = arsenate + AH2 + H(+). Component of the arsenate respiratory reductase (Arr) complex, which catalyzes the reduction of arsenate (As(V)) to arsenite (As(III)). Can use acetate as the electron donor. ArrA is the arsenate-binding subunit. The chain is Arsenate respiratory reductase molybdopterin-containing subunit ArrA from Chrysiogenes arsenatis.